The following is a 103-amino-acid chain: Protein translation factor SUI1 homolog (103 aa).

This sequence belongs to the SUI1 family.

The chain is Protein translation factor SUI1 homolog from Hyperthermus butylicus (strain DSM 5456 / JCM 9403 / PLM1-5).